Consider the following 251-residue polypeptide: uncharacterized protein (251 aa).

4 consecutive transmembrane segments (helical) span residues 56–76 (LAVV…TLVA), 104–124 (IITV…FLLT), 184–204 (HGFV…LIIV), and 208–228 (YLIA…ANIS).

It is found in the membrane. This is an uncharacterized protein from Caenorhabditis elegans.